Reading from the N-terminus, the 450-residue chain is tRNA-2-methylthio-N(6)-dimethylallyladenosine synthase (450 aa).

In terms of domain architecture, MTTase N-terminal spans 2–119 (KKVFVKTYGC…LPDLIARRQR (118 aa)). The [4Fe-4S] cluster site is built by Cys-11, Cys-48, Cys-82, Cys-156, Cys-160, and Cys-163. A Radical SAM core domain is found at 142–375 (RVEGPSAFVS…QATIEENVQR (234 aa)). One can recognise a TRAM domain in the interval 378-448 (QGMVGTVQRI…PHSLRGEIVV (71 aa)).

It belongs to the methylthiotransferase family. MiaB subfamily. Monomer. [4Fe-4S] cluster is required as a cofactor.

The protein resides in the cytoplasm. It carries out the reaction N(6)-dimethylallyladenosine(37) in tRNA + (sulfur carrier)-SH + AH2 + 2 S-adenosyl-L-methionine = 2-methylsulfanyl-N(6)-dimethylallyladenosine(37) in tRNA + (sulfur carrier)-H + 5'-deoxyadenosine + L-methionine + A + S-adenosyl-L-homocysteine + 2 H(+). Its function is as follows. Catalyzes the methylthiolation of N6-(dimethylallyl)adenosine (i(6)A), leading to the formation of 2-methylthio-N6-(dimethylallyl)adenosine (ms(2)i(6)A) at position 37 in tRNAs that read codons beginning with uridine. This Cupriavidus taiwanensis (strain DSM 17343 / BCRC 17206 / CCUG 44338 / CIP 107171 / LMG 19424 / R1) (Ralstonia taiwanensis (strain LMG 19424)) protein is tRNA-2-methylthio-N(6)-dimethylallyladenosine synthase.